The following is a 474-amino-acid chain: Microtubule protein alp7 (474 aa).

The segment covering 1–20 (MSDIVSSSTDYSRRSPSSSS) has biased composition (low complexity). 3 disordered regions span residues 1-79 (MSDI…DTLN), 93-114 (KSFD…LSQH), and 164-223 (SLQT…NSTQ). Phosphoserine is present on serine 17. The span at 25–36 (ETDHTGFHEKRQ) shows a compositional bias: basic and acidic residues. Polar residues predominate over residues 66-76 (SKPNPQLNLKD). Composition is skewed to polar residues over residues 177 to 189 (SNGS…NTAP) and 201 to 223 (RNSA…NSTQ). Coiled-coil stretches lie at residues 219 to 273 (INST…QLRS) and 367 to 471 (KISN…LNLE).

Interacts with alp14.

It localises to the nucleus. The protein localises to the cytoplasm. It is found in the cytoskeleton. Its subcellular location is the spindle. The protein resides in the chromosome. It localises to the centromere. The protein localises to the kinetochore. Required for bipolar spindle formation and proper chromosome segregation. Has an indirect role in connecting the kinetochores and the plus end of pole to chromosome microtubules by targeting alp14 to the spindle pole body. Involved in the emergence of large microtubule organizing centers (MTOC) in interphase cells. Attaches to the minus ends of microtubules and associates with the sites of microtubule attachment on the nuclear envelope. This leads to the stabilization of the microtubule bundles. In Schizosaccharomyces pombe (strain 972 / ATCC 24843) (Fission yeast), this protein is Microtubule protein alp7 (alp7).